Reading from the N-terminus, the 442-residue chain is CAAX prenyl protease 1 homolog (442 aa).

The Lumenal segment spans residues 1–62 (MDASCLFKAL…KARDYKIDNH (62 aa)). A helical transmembrane segment spans residues 63–83 (LFGFFHSWFNQLLLTAQLIGG). Residue Tyr84 is a topological domain, cytoplasmic. Residues 85-105 (YPFLWYATASYPLHVAVFLSI) traverse the membrane as a helical segment. At 106–146 (NSIIETIIDLPWDLYSTFIIEDAHGFNKQTIGFYFVDKIKK) the chain is on the lumenal side. A helical membrane pass occupies residues 147–167 (MLVGFALTMPIVYGIEWIIVN). Residues 168-170 (GGP) are Cytoplasmic-facing. Residues 171-191 (YFFVYIWLFVSVVVLLLMTIY) traverse the membrane as a helical segment. Topologically, residues 192 to 311 (PTFIAPLFDK…ELGHWALWHT (120 aa)) are lumenal. Position 301 (His301) interacts with Zn(2+). Residue Glu302 is part of the active site. His305 serves as a coordination point for Zn(2+). A helical transmembrane segment spans residues 312–332 (LINLVITEVNLFFSFAVFGYF). Residues 333-349 (YKWEALYQGFGYHDTPP) are Cytoplasmic-facing. The helical transmembrane segment at 350 to 370 (VIGMMLIFQFVLALYNQLASI) threads the bilayer. Topologically, residues 371-442 (GMVIHSRSAE…AVRAFQAKNK (72 aa)) are lumenal. Position 380 (Glu380) interacts with Zn(2+). Asp384 functions as the Proton donor in the catalytic mechanism.

The protein belongs to the peptidase M48A family. Requires Zn(2+) as cofactor.

It localises to the endoplasmic reticulum membrane. The protein resides in the membrane. The enzyme catalyses Hydrolyzes the peptide bond -P2-(S-farnesyl or geranylgeranyl)C-P1'-P2'-P3'-COOH where P1' and P2' are amino acids with aliphatic side chains and P3' is any C-terminal residue.. Its function is as follows. Proteolytically removes the C-terminal three residues of farnesylated proteins. In Caenorhabditis elegans, this protein is CAAX prenyl protease 1 homolog.